Reading from the N-terminus, the 158-residue chain is MRLKNRLFWIAAFIAFFLDQITKYWVVQTFSLGQTLPLLTGIFHFTYVTNTGAAFSLLSGKVEWLRWLSLGVSLVLIALALFGPTLNLWDQLGYGLILGGAMGNGIDRFVLGHVVDFLDFRLISFPVFNVADSFISIGIVFLLIASFQKTPTSTGRLD.

A run of 4 helical transmembrane segments spans residues leucine 7–valine 27, leucine 38–leucine 58, leucine 68–leucine 88, and leucine 92–glycine 112. Residues aspartate 116 and aspartate 132 contribute to the active site. Residues phenylalanine 125–alanine 145 traverse the membrane as a helical segment.

It belongs to the peptidase A8 family.

The protein localises to the cell inner membrane. The catalysed reaction is Release of signal peptides from bacterial membrane prolipoproteins. Hydrolyzes -Xaa-Yaa-Zaa-|-(S,diacylglyceryl)Cys-, in which Xaa is hydrophobic (preferably Leu), and Yaa (Ala or Ser) and Zaa (Gly or Ala) have small, neutral side chains.. It participates in protein modification; lipoprotein biosynthesis (signal peptide cleavage). Its function is as follows. This protein specifically catalyzes the removal of signal peptides from prolipoproteins. The chain is Lipoprotein signal peptidase from Nostoc punctiforme (strain ATCC 29133 / PCC 73102).